The primary structure comprises 122 residues: MIQQETRLKVADNSGAREVLTIKVLGGSGRKTANIGDVIVCTVKQATPGGVVKKGEVVKAVIVRTKSGARRNDGSYISFDENACVIIRDDKSPRGTRIFGPVARELRDNNYMKIVSLAPEVL.

The protein belongs to the universal ribosomal protein uL14 family. Part of the 50S ribosomal subunit. Forms a cluster with proteins L3 and L19. In the 70S ribosome, L14 and L19 interact and together make contacts with the 16S rRNA in bridges B5 and B8.

Binds to 23S rRNA. Forms part of two intersubunit bridges in the 70S ribosome. In Bacillus pumilus (strain SAFR-032), this protein is Large ribosomal subunit protein uL14.